Consider the following 369-residue polypeptide: Superinfection exclusion protein (369 aa).

A signal peptide spans 1–15; that stretch reads MIALLILSLTCSAST.

The protein belongs to the serpin family. Orthopoxvirus OPG040 subfamily. In terms of assembly, interacts with A56 protein.

The protein resides in the virion membrane. It is found in the host cell membrane. Prevents cell to cell fusion via its interaction with A56 protein. The A56-K2 complex associates with components of the entry fusion complex (EFC) presumably to avoid superinfection and syncytium formation. The polypeptide is Superinfection exclusion protein (OPG040) (Vaccinia virus (strain Ankara) (VACV)).